The chain runs to 68 residues: TxMMSK-03 (68 aa).

The N-terminal stretch at 1–19 (MSKLGALLIICLLLFPLTA) is a signal peptide. Positions 20–50 (VPMDGDQPADRPAERMQDDISFEQHPMFDAT) are excised as a propeptide. 3 cysteine pairs are disulfide-bonded: cysteine 53–cysteine 67, cysteine 54–cysteine 63, and cysteine 59–cysteine 66. Proline 65 carries the 4-hydroxyproline; partial modification.

Post-translationally, contains 3 disulfide bonds. As to expression, expressed by the venom duct. Both hydroxylated and non-hydroxylated forms are mostly and only present in part 2 (proximal of the venom bulb) of the venom duct, respectively.

The protein localises to the secreted. This chain is TxMMSK-03, found in Conus textile (Cloth-of-gold cone).